The sequence spans 323 residues: Aldo-keto reductase family 1 member C21 (323 aa).

An NADP(+)-binding site is contributed by 20 to 24 (GFGTA). Lys-31 serves as a coordination point for substrate. Position 50 (Asp-50) interacts with NADP(+). The active-site Proton donor is Tyr-55. Residue His-117 participates in substrate binding. NADP(+)-binding positions include 166 to 167 (SN), Gln-190, 216 to 224 (YGVLGTQRY), and 270 to 280 (TSLKEERIKEN).

Belongs to the aldo/keto reductase family. In terms of assembly, monomer. In terms of tissue distribution, detected in kidney and brain.

It is found in the cytoplasm. It carries out the reaction androsterone + NADP(+) = 5alpha-androstan-3,17-dione + NADPH + H(+). The catalysed reaction is androsterone + NAD(+) = 5alpha-androstan-3,17-dione + NADH + H(+). With respect to regulation, inhibited by high concentrations of substrate. Its function is as follows. NADP-dependent 17-alpha-hydroxysteroid dehydrogenase that converts 5-alpha-androstane-3,17-dione into androsterone. Has lower 3-alpha-hydroxysteroid dehydrogenase activity. Has broad substrate specificity and acts on various 17-alpha-hydroxysteroids, 17-ketosteroids, 3-alpha hydroxysteroids and 3-ketosteroids. Reduction of keto groups is strictly stereoselective. Reduction of 17-ketosteroids yields only 17-alpha-hydroxysteroids. Likewise, reduction of 3-ketosteroids yields only 3-alpha-hydroxysteroids. This is Aldo-keto reductase family 1 member C21 (Akr1c21) from Mus musculus (Mouse).